We begin with the raw amino-acid sequence, 139 residues long: Putative pre-16S rRNA nuclease (139 aa).

This sequence belongs to the YqgF nuclease family.

The protein resides in the cytoplasm. Functionally, could be a nuclease involved in processing of the 5'-end of pre-16S rRNA. The polypeptide is Putative pre-16S rRNA nuclease (Dictyoglomus thermophilum (strain ATCC 35947 / DSM 3960 / H-6-12)).